The following is a 607-amino-acid chain: UvrABC system protein C (607 aa).

Residues 16–94 form the GIY-YIG domain; the sequence is GRPGVYRMFD…IKEWRPPYNI (79 aa). The 36-residue stretch at 203-238 folds into the UVR domain; it reads NALSDELNASMEKAAMALDFERAAELRDQVALLRRV.

The protein belongs to the UvrC family. In terms of assembly, interacts with UvrB in an incision complex.

It localises to the cytoplasm. Its function is as follows. The UvrABC repair system catalyzes the recognition and processing of DNA lesions. UvrC both incises the 5' and 3' sides of the lesion. The N-terminal half is responsible for the 3' incision and the C-terminal half is responsible for the 5' incision. The chain is UvrABC system protein C from Pseudomonas syringae pv. tomato (strain ATCC BAA-871 / DC3000).